Here is a 377-residue protein sequence, read N- to C-terminus: Flagellin C (377 aa).

2 coiled-coil regions span residues 103-129 and 301-340; these read SNSKADRVAIQEEITALNDELNRIAET and VDSHRAQLGAFQNRFNHAINNLDNINENVNASKSRIKDTD.

This sequence belongs to the bacterial flagellin family. In terms of assembly, heteromer of multiple flagellin subunits including FlaA, FlaB, FlaC, FlaD and possibly FlaE.

The protein resides in the secreted. It is found in the bacterial flagellum. Functionally, flagellin is the subunit protein which polymerizes to form the filaments of bacterial flagella. FlaC is not essential for flagellar synthesis and motility. The sequence is that of Flagellin C (flaC) from Vibrio anguillarum (Listonella anguillarum).